A 367-amino-acid chain; its full sequence is tRNA(Ile)-lysidine synthase (367 aa).

32–37 (SGGSDS) is an ATP binding site.

This sequence belongs to the tRNA(Ile)-lysidine synthase family.

The protein localises to the cytoplasm. The catalysed reaction is cytidine(34) in tRNA(Ile2) + L-lysine + ATP = lysidine(34) in tRNA(Ile2) + AMP + diphosphate + H(+). Ligates lysine onto the cytidine present at position 34 of the AUA codon-specific tRNA(Ile) that contains the anticodon CAU, in an ATP-dependent manner. Cytidine is converted to lysidine, thus changing the amino acid specificity of the tRNA from methionine to isoleucine. This chain is tRNA(Ile)-lysidine synthase, found in Hyphomonas neptunium (strain ATCC 15444).